Consider the following 514-residue polypeptide: Putative fumarate hydratase class I (514 aa).

Residues C62, C187, and C274 each coordinate [4Fe-4S] cluster.

Belongs to the class-I fumarase family. Homodimer. It depends on [4Fe-4S] cluster as a cofactor.

The catalysed reaction is (S)-malate = fumarate + H2O. It functions in the pathway carbohydrate metabolism; tricarboxylic acid cycle; (S)-malate from fumarate: step 1/1. Functionally, catalyzes the reversible hydration of fumarate to (S)-malate. The chain is Putative fumarate hydratase class I (fumA) from Geobacillus stearothermophilus (Bacillus stearothermophilus).